Reading from the N-terminus, the 221-residue chain is Lipoprotein-releasing system ATP-binding protein LolD (221 aa).

Residues 6–220 (LILKNISKHY…YKLKHRLLNI (215 aa)) form the ABC transporter domain. 42 to 49 (GSSGSGKS) is an ATP binding site.

The protein belongs to the ABC transporter superfamily. Lipoprotein translocase (TC 3.A.1.125) family. In terms of assembly, the complex is composed of two ATP-binding proteins (LolD) and two transmembrane proteins (LolC and LolE).

The protein resides in the cell inner membrane. Its function is as follows. Part of the ABC transporter complex LolCDE involved in the translocation of mature outer membrane-directed lipoproteins, from the inner membrane to the periplasmic chaperone, LolA. Responsible for the formation of the LolA-lipoprotein complex in an ATP-dependent manner. In Rickettsia conorii (strain ATCC VR-613 / Malish 7), this protein is Lipoprotein-releasing system ATP-binding protein LolD.